Here is a 511-residue protein sequence, read N- to C-terminus: GMP synthase [glutamine-hydrolyzing] (511 aa).

Residues 5–195 (DILVLDFGSQ…AKYACNCESV (191 aa)) form the Glutamine amidotransferase type-1 domain. The Nucleophile role is filled by Cys-82. Catalysis depends on residues His-169 and Glu-171. Residues 196 to 386 (WNMGSFAKTQ…LGLSKEVVYR (191 aa)) enclose the GMPS ATP-PPase domain. Residue 223-229 (SGGVDSS) coordinates ATP.

As to quaternary structure, homodimer.

The catalysed reaction is XMP + L-glutamine + ATP + H2O = GMP + L-glutamate + AMP + diphosphate + 2 H(+). Its pathway is purine metabolism; GMP biosynthesis; GMP from XMP (L-Gln route): step 1/1. Functionally, catalyzes the synthesis of GMP from XMP. The sequence is that of GMP synthase [glutamine-hydrolyzing] from Campylobacter jejuni subsp. doylei (strain ATCC BAA-1458 / RM4099 / 269.97).